The following is a 115-amino-acid chain: Large ribosomal subunit protein bL20 (115 aa).

The protein belongs to the bacterial ribosomal protein bL20 family.

Functionally, binds directly to 23S ribosomal RNA and is necessary for the in vitro assembly process of the 50S ribosomal subunit. It is not involved in the protein synthesizing functions of that subunit. The polypeptide is Large ribosomal subunit protein bL20 (Prochlorococcus marinus (strain MIT 9515)).